The primary structure comprises 47 residues: MAKGKRTFQPNNRRRARVHGFRLRMRTRAGRAIVSARRRKGRATLTA.

The protein belongs to the bacterial ribosomal protein bL34 family.

This is Large ribosomal subunit protein bL34 from Nocardia farcinica (strain IFM 10152).